Consider the following 406-residue polypeptide: Cholinephosphotransferase 1 (406 aa).

At A2 the chain carries N-acetylalanine. Residues 2–62 lie on the Cytoplasmic side of the membrane; the sequence is AAGAGAGSAP…LLQWIPLWMA (61 aa). The helical transmembrane segment at 63–83 threads the bilayer; the sequence is PNSITLLGLAVNVVTTLVLIS. A CDP-choline-binding site is contributed by N64. Over 84-93 the chain is Lumenal; sequence YCPTATEEAP. Residues 94–118 traverse the membrane as a helical segment; it reads YWTYLLCALGLFIYQSLDAIDGKQA. D111 and D114 together coordinate Mg(2+). Position 119 (R119) interacts with CDP-choline. Over 119-125 the chain is Cytoplasmic; the sequence is RRTNSCS. The chain crosses the membrane as a helical span at residues 126–150; sequence PLGELFDHGCDSLSTVFMAVGASIA. D132 contributes to the Mg(2+) binding site. H133 serves as the catalytic Proton acceptor. D136 is a Mg(2+) binding site. Topologically, residues 151–160 are lumenal; it reads ARLGTYPDWF. The chain crosses the membrane as a helical span at residues 161 to 179; it reads FFCSFIGMFVFYCAHWQTY. Topologically, residues 180 to 190 are cytoplasmic; it reads VSGMLRFGKVD. The helical transmembrane segment at 191 to 207 threads the bilayer; sequence VTEIQIALVIVFVLSAF. Residues 208–222 lie on the Lumenal side of the membrane; it reads GGATMWDYTIPILEI. A helical membrane pass occupies residues 223–248; the sequence is KLKILPVLGFLGGVIFSCSNYFHVIL. Over 249–265 the chain is Cytoplasmic; that stretch reads HGGVGKNGSTIAGTSVL. A helical transmembrane segment spans residues 266–281; sequence SPGLHIGLIIILAIMI. Topologically, residues 282–293 are lumenal; it reads YKKSATDVFEKH. A helical membrane pass occupies residues 294–316; the sequence is PCLYILMFGCVFAKVSQKLVVAH. At 317–329 the chain is on the cytoplasmic side; the sequence is MTKSELYLQDTVF. Residues 330 to 339 traverse the membrane as a helical segment; it reads LGPGLLFLDQ. Residues 340–346 are Lumenal-facing; sequence YFNNFID. Residues 347 to 376 form a helical membrane-spanning segment; sequence EYVVLWMAMVISSFDMVIYFSALCLQISRH. Residues 377–406 lie on the Cytoplasmic side of the membrane; it reads LHLNIFKTACHQAPEQVQVLSSKSHQNNMD.

The protein belongs to the CDP-alcohol phosphatidyltransferase class-I family. Requires Mg(2+) as cofactor. Mn(2+) serves as cofactor. Highly expressed in testis, colon, small intestine, heart, prostate and spleen. Also detected in kidney, skeletal muscle, pancreas, leukocytes, ovary and thymus. Weakly expressed in the brain, placenta and lung. Overexpressed in cancerous breast epithelial cell lines.

The protein resides in the golgi apparatus membrane. It carries out the reaction CDP-choline + a 1,2-diacyl-sn-glycerol = a 1,2-diacyl-sn-glycero-3-phosphocholine + CMP + H(+). The catalysed reaction is 1-octadecanoyl-2-(5Z,8Z,11Z,14Z-eicosatetraenoyl)-sn-glycerol + CDP-choline = 1-octadecanoyl-2-(5Z,8Z,11Z,14Z-eicosatetraenoyl)-sn-glycero-3-phosphocholine + CMP + H(+). The enzyme catalyses 1-hexadecanoyl-2-(9Z-octadecenoyl)-sn-glycerol + CDP-choline = 1-hexadecanoyl-2-(9Z-octadecenoyl)-sn-glycero-3-phosphocholine + CMP + H(+). It catalyses the reaction 1-hexadecanoyl-2-(4Z,7Z,10Z,13Z,16Z,19Z-docosahexaenoyl)-sn-glycerol + CDP-choline = 1-hexadecanoyl-2-(4Z,7Z,10Z,13Z,16Z,19Z-docosahexaenoyl)-sn-glycero-3-phosphocholine + CMP + H(+). It carries out the reaction 1,2-dioctanoyl-sn-glycerol + CDP-choline = 1,2-dioctanoyl-sn-glycero-3-phosphocholine + CMP + H(+). Its pathway is phospholipid metabolism; phosphatidylcholine biosynthesis; phosphatidylcholine from phosphocholine: step 2/2. Its function is as follows. Catalyzes the final step of de novo phosphatidylcholine (PC) synthesis, i.e. the transfer of choline phosphate from CDP-choline to the free hydroxyl of a diacylglycerol (DAG), producing a PC. It thereby plays a central role in the formation and maintenance of vesicular membranes. In Homo sapiens (Human), this protein is Cholinephosphotransferase 1.